Consider the following 186-residue polypeptide: MRCYIMYKYMKEAWKNPDESYVKELMRERLPKWRRQPVIIRIDKPTRIDRARRLGYKAKTGYVVARIRVRRGSRRKSRFKNGRDPKRMGVNKISGEKSIQRMAEERVARKYPNLEVLNSYWVWEDGKAKYYEVILVDPQCPSIQHDNKINWICSKKHTRRAFRGLTSAGKKGRGLNKKGKGAEKVR.

The disordered stretch occupies residues 163–186 (RGLTSAGKKGRGLNKKGKGAEKVR). The span at 170-179 (KKGRGLNKKG) shows a compositional bias: basic residues.

Belongs to the eukaryotic ribosomal protein eL15 family.

This Methanosphaera stadtmanae (strain ATCC 43021 / DSM 3091 / JCM 11832 / MCB-3) protein is Large ribosomal subunit protein eL15.